A 935-amino-acid polypeptide reads, in one-letter code: Protein translocase subunit SecA (935 aa).

ATP is bound by residues Q90, 108–112 (GEGKT), and D504. The tract at residues 543-568 (GGRRPQGFGTSKKKGKNWSPSDADIF) is disordered.

It belongs to the SecA family. Monomer and homodimer. Part of the essential Sec protein translocation apparatus which comprises SecA, SecYEG and auxiliary proteins SecDF. Other proteins may also be involved.

It localises to the cell inner membrane. The protein resides in the cellular thylakoid membrane. Its subcellular location is the cytoplasm. The catalysed reaction is ATP + H2O + cellular proteinSide 1 = ADP + phosphate + cellular proteinSide 2.. Its function is as follows. Part of the Sec protein translocase complex. Interacts with the SecYEG preprotein conducting channel. Has a central role in coupling the hydrolysis of ATP to the transfer of proteins into and across the cell membrane, serving as an ATP-driven molecular motor driving the stepwise translocation of polypeptide chains across the membrane. Probably participates in protein translocation into and across both the cytoplasmic and thylakoid membranes in cyanobacterial cells. In Rippkaea orientalis (strain PCC 8801 / RF-1) (Cyanothece sp. (strain PCC 8801)), this protein is Protein translocase subunit SecA.